We begin with the raw amino-acid sequence, 33 residues long: Glutaminase-asparaginase (33 aa).

The Asparaginase/glutaminase domain occupies 1-33 (NVVVLATGGTIAGAGTNAFASQXGPLGMVVEGK). Thr-10 (acyl-ester intermediate) is an active-site residue.

The protein belongs to the asparaginase 1 family. In terms of assembly, homotetramer.

It is found in the periplasm. The enzyme catalyses L-glutamine + H2O = L-glutamate + NH4(+). It carries out the reaction L-asparagine + H2O = L-aspartate + NH4(+). This Delftia acidovorans (Pseudomonas acidovorans) protein is Glutaminase-asparaginase (ansB).